The chain runs to 467 residues: MKIRTRYAPSPTGFLHIGGARTALFNYLFAKHHNGDFILRIEDSDNSRNIKDGEKSQIENLLWLGIIPDEKPGSETKFGPYRQSEKLERYQKLAQELIKKGFAYYAFDNQEELELQKKEQIAKGIFSFRYDQNWLKISDQEKQKRLKNKHFVIRFKVDKAKNFCWNDLVRGQICFEGSAISDWVIIKSDGFPTYNFAVVVDDFDMEISHIFRGEEHISNTPKQIGIYQAFNWKTPKFGHLTIITDKNGKKLSKRDKNLFQFIEDYKNQGYHSEAFFNFLALLGWTSPDSQEFFDHKSLIKAFDYKRLSKAPSYFDIEKLNWFSKSYISKMTVDKILENLELSDNQIWNRFFVETFQKSSIKYADFYKNFEFFHRPKQEMDEKMLEIFEKLDKKPVKIFASRIDYQNWDYTKINDLIKEIGQKLEITGKNLLLPIRLATTFTNSGPELARAIWLLGKKIIEKRLLKWK.

Residues 9–19 (PSPTGFLHIGG) carry the 'HIGH' region motif. The short motif at 250 to 254 (KLSKR) is the 'KMSKS' region element. Lys253 contacts ATP.

The protein belongs to the class-I aminoacyl-tRNA synthetase family. Glutamate--tRNA ligase type 1 subfamily. Monomer.

The protein localises to the cytoplasm. The enzyme catalyses tRNA(Glu) + L-glutamate + ATP = L-glutamyl-tRNA(Glu) + AMP + diphosphate. Its function is as follows. Catalyzes the attachment of glutamate to tRNA(Glu) in a two-step reaction: glutamate is first activated by ATP to form Glu-AMP and then transferred to the acceptor end of tRNA(Glu). This chain is Glutamate--tRNA ligase, found in Mesomycoplasma hyopneumoniae (strain 7448) (Mycoplasma hyopneumoniae).